The chain runs to 197 residues: NADH-quinone oxidoreductase subunit C (197 aa).

This sequence belongs to the complex I 30 kDa subunit family. In terms of assembly, NDH-1 is composed of 14 different subunits. Subunits NuoB, C, D, E, F, and G constitute the peripheral sector of the complex.

It localises to the cell inner membrane. It carries out the reaction a quinone + NADH + 5 H(+)(in) = a quinol + NAD(+) + 4 H(+)(out). Functionally, NDH-1 shuttles electrons from NADH, via FMN and iron-sulfur (Fe-S) centers, to quinones in the respiratory chain. The immediate electron acceptor for the enzyme in this species is believed to be ubiquinone. Couples the redox reaction to proton translocation (for every two electrons transferred, four hydrogen ions are translocated across the cytoplasmic membrane), and thus conserves the redox energy in a proton gradient. In Methylobacillus flagellatus (strain ATCC 51484 / DSM 6875 / VKM B-1610 / KT), this protein is NADH-quinone oxidoreductase subunit C.